The following is a 175-amino-acid chain: Large ribosomal subunit protein uL6 (175 aa).

The protein belongs to the universal ribosomal protein uL6 family. In terms of assembly, part of the 50S ribosomal subunit.

This protein binds to the 23S rRNA, and is important in its secondary structure. It is located near the subunit interface in the base of the L7/L12 stalk, and near the tRNA binding site of the peptidyltransferase center. The polypeptide is Large ribosomal subunit protein uL6 (Xanthomonas oryzae pv. oryzae (strain MAFF 311018)).